Here is a 240-residue protein sequence, read N- to C-terminus: Enoyl-CoA delta isomerase 2, peroxisomal (240 aa).

The short motif at 238-240 (PKL) is the Microbody targeting signal element.

It belongs to the enoyl-CoA hydratase/isomerase family.

It localises to the peroxisome. The enzyme catalyses a (3Z)-enoyl-CoA = a 4-saturated (2E)-enoyl-CoA. It catalyses the reaction a (3E)-enoyl-CoA = a 4-saturated (2E)-enoyl-CoA. Its pathway is lipid metabolism; fatty acid beta-oxidation. Able to isomerize both 3-cis and 3-trans double bonds into the 2-trans form in a range of enoyl-CoA species. Essential for the beta oxidation of unsaturated fatty acids. Involved with IBR1 and IBR3 in the peroxisomal beta-oxidation of indole-3-butyric acid (IBA) to form indole-3-acetic acid (IAA), a biologically active auxin. The sequence is that of Enoyl-CoA delta isomerase 2, peroxisomal from Arabidopsis thaliana (Mouse-ear cress).